We begin with the raw amino-acid sequence, 249 residues long: Triosephosphate isomerase (249 aa).

Positions 12 and 14 each coordinate substrate. Lys-14 carries the N6-acetyllysine modification. Tyr-68 bears the 3'-nitrotyrosine mark. At Ser-80 the chain carries Phosphoserine. His-96 (electrophile) is an active-site residue. Ser-106 is subject to Phosphoserine. Residue Lys-142 forms a Glycyl lysine isopeptide (Lys-Gly) (interchain with G-Cter in SUMO1) linkage. Residue Lys-149 is modified to N6-succinyllysine. Lys-156 carries the N6-acetyllysine; alternate modification. Lys-156 is subject to N6-succinyllysine; alternate. Residue Glu-166 is the Proton acceptor of the active site. Residue Thr-173 is modified to Phosphothreonine. Lys-194 is subject to N6-acetyllysine; alternate. N6-succinyllysine; alternate is present on Lys-194. N6-methyllysine; alternate is present on Lys-194. At Ser-198 the chain carries Phosphoserine. Tyr-209 carries the 3'-nitrotyrosine modification. Position 212 is a phosphoserine (Ser-212). Residue Thr-214 is modified to Phosphothreonine. At Ser-223 the chain carries Phosphoserine. Lys-238 is subject to N6-acetyllysine.

The protein belongs to the triosephosphate isomerase family. Homodimer.

It localises to the cytoplasm. It carries out the reaction dihydroxyacetone phosphate = methylglyoxal + phosphate. The catalysed reaction is D-glyceraldehyde 3-phosphate = dihydroxyacetone phosphate. It participates in carbohydrate degradation; glycolysis; D-glyceraldehyde 3-phosphate from glycerone phosphate: step 1/1. It functions in the pathway carbohydrate biosynthesis; gluconeogenesis. In terms of biological role, triosephosphate isomerase is an extremely efficient metabolic enzyme that catalyzes the interconversion between dihydroxyacetone phosphate (DHAP) and D-glyceraldehyde-3-phosphate (G3P) in glycolysis and gluconeogenesis. Functionally, it is also responsible for the non-negligible production of methylglyoxal a reactive cytotoxic side-product that modifies and can alter proteins, DNA and lipids. The protein is Triosephosphate isomerase (Tpi1) of Rattus norvegicus (Rat).